A 381-amino-acid chain; its full sequence is Probable peptidoglycan glycosyltransferase FtsW (381 aa).

The Cytoplasmic portion of the chain corresponds to 1 to 15 (MNNKKKIVKIFFYDK). Residues 16–36 (ILFFLLISLSIIGIIIVSSAS) form a helical membrane-spanning segment. Residues 37-53 (ISFGIRLHNDYFYFAKR) are Periplasmic-facing. The helical transmembrane segment at 54–74 (NLLYFFLSFFLFFQIIRIPIN) threads the bilayer. The Cytoplasmic portion of the chain corresponds to 75–81 (QLEKYNK). The helical transmembrane segment at 82 to 102 (IALLINLFLLIIVFIIGNSIN) threads the bilayer. Residues 103 to 109 (GAIRWIK) lie on the Periplasmic side of the membrane. Residues 110–130 (IGFFSIQPSECSKLILFFYIS) form a helical membrane-spanning segment. At 131-143 (DYIVKKNKELKNK) the chain is on the cytoplasmic side. The chain crosses the membrane as a helical span at residues 144 to 164 (LWGFLKPIIIMLIFVILLLMQ). At 165–166 (PD) the chain is on the periplasmic side. The next 2 membrane-spanning stretches (helical) occupy residues 167–187 (LGNS…AGIN) and 188–208 (LWKC…LIIF). The Periplasmic portion of the chain corresponds to 209-278 (KPYRIRRILS…FSILGEELGY (70 aa)). The helical transmembrane segment at 279-299 (IGSIIILIMLFFVIFRIFLIG) threads the bilayer. The Cytoplasmic segment spans residues 300-317 (KNSFIQKKFFSGYFSFSV). Residues 318–338 (GIWISLQTIMNVGGVIGILPI) traverse the membrane as a helical segment. Topologically, residues 339–343 (KGLTL) are periplasmic. Residues 344-364 (PFISYGGSSLITIFSAIAIVI) form a helical membrane-spanning segment. The Cytoplasmic portion of the chain corresponds to 365-381 (RSDFELRINKYQAYLKQ).

Belongs to the SEDS family. FtsW subfamily.

Its subcellular location is the cell inner membrane. The catalysed reaction is [GlcNAc-(1-&gt;4)-Mur2Ac(oyl-L-Ala-gamma-D-Glu-L-Lys-D-Ala-D-Ala)](n)-di-trans,octa-cis-undecaprenyl diphosphate + beta-D-GlcNAc-(1-&gt;4)-Mur2Ac(oyl-L-Ala-gamma-D-Glu-L-Lys-D-Ala-D-Ala)-di-trans,octa-cis-undecaprenyl diphosphate = [GlcNAc-(1-&gt;4)-Mur2Ac(oyl-L-Ala-gamma-D-Glu-L-Lys-D-Ala-D-Ala)](n+1)-di-trans,octa-cis-undecaprenyl diphosphate + di-trans,octa-cis-undecaprenyl diphosphate + H(+). Its pathway is cell wall biogenesis; peptidoglycan biosynthesis. Its function is as follows. Peptidoglycan polymerase that is essential for cell division. The protein is Probable peptidoglycan glycosyltransferase FtsW of Wigglesworthia glossinidia brevipalpis.